Reading from the N-terminus, the 361-residue chain is Histidinol-phosphate aminotransferase (361 aa).

Residue Lys218 is modified to N6-(pyridoxal phosphate)lysine.

This sequence belongs to the class-II pyridoxal-phosphate-dependent aminotransferase family. Histidinol-phosphate aminotransferase subfamily. Homodimer. The cofactor is pyridoxal 5'-phosphate.

It catalyses the reaction L-histidinol phosphate + 2-oxoglutarate = 3-(imidazol-4-yl)-2-oxopropyl phosphate + L-glutamate. Its pathway is amino-acid biosynthesis; L-histidine biosynthesis; L-histidine from 5-phospho-alpha-D-ribose 1-diphosphate: step 7/9. In Ruegeria pomeroyi (strain ATCC 700808 / DSM 15171 / DSS-3) (Silicibacter pomeroyi), this protein is Histidinol-phosphate aminotransferase.